A 240-amino-acid chain; its full sequence is Ribosomal RNA large subunit methyltransferase E (240 aa).

Residues 1-28 (MSSSPRSPDARPLKVRVKSARTRSSSSQ) form a disordered region. Residues Gly80, Trp82, Asp103, Asp119, and Asp143 each contribute to the S-adenosyl-L-methionine site. Lys183 (proton acceptor) is an active-site residue.

It belongs to the class I-like SAM-binding methyltransferase superfamily. RNA methyltransferase RlmE family.

It is found in the cytoplasm. It carries out the reaction uridine(2552) in 23S rRNA + S-adenosyl-L-methionine = 2'-O-methyluridine(2552) in 23S rRNA + S-adenosyl-L-homocysteine + H(+). Its function is as follows. Specifically methylates the uridine in position 2552 of 23S rRNA at the 2'-O position of the ribose in the fully assembled 50S ribosomal subunit. In Azorhizobium caulinodans (strain ATCC 43989 / DSM 5975 / JCM 20966 / LMG 6465 / NBRC 14845 / NCIMB 13405 / ORS 571), this protein is Ribosomal RNA large subunit methyltransferase E.